A 503-amino-acid polypeptide reads, in one-letter code: Zinc finger and BTB domain-containing protein 37 (503 aa).

A BTB domain is found at 32–96 (CDIVVNVQGQ…CYTGRICLQL (65 aa)). 2 disordered regions span residues 140–206 (QTRT…SDVE) and 280–344 (GHGS…QVEE). Positions 144-154 (KHQERPPESHR) are enriched in basic and acidic residues. Polar residues predominate over residues 155-167 (VTPNLNRSLSPRH). Residues 319-336 (TERHRARSESPGRMDEPK) are compositionally biased toward basic and acidic residues. C2H2-type zinc fingers lie at residues 373–395 (LTCI…MRLH), 401–423 (FVCR…IRKH), and 429–452 (FHCH…RKNH). Residues 457-503 (PLEGPHSISPETTVTSRGQAEEESPSQEETVAPGEAVQGSVSTTGPD) are disordered. Positions 465-474 (SPETTVTSRG) are enriched in polar residues.

The protein resides in the nucleus. May be involved in transcriptional regulation. The polypeptide is Zinc finger and BTB domain-containing protein 37 (ZBTB37) (Homo sapiens (Human)).